An 86-amino-acid polypeptide reads, in one-letter code: Small ribosomal subunit protein bS20 (86 aa).

Residues 1–25 (MANIKSQQKRNRTNERARLRNKAVK) form a disordered region.

Belongs to the bacterial ribosomal protein bS20 family.

Functionally, binds directly to 16S ribosomal RNA. The protein is Small ribosomal subunit protein bS20 of Mycobacterium bovis (strain ATCC BAA-935 / AF2122/97).